A 259-amino-acid polypeptide reads, in one-letter code: Adenosylcobinamide-GDP ribazoletransferase (259 aa).

Helical transmembrane passes span 37 to 57, 58 to 78, 118 to 138, 143 to 163, 195 to 215, and 237 to 257; these read ASRYFGLVGTLIGVLSALVYS, VMLHWVSPSIAIIFAMIASVL, ALALVLCLLLKWQLLSELALF, VSLALILGHTLSRVVAASFIF, AAISLLLISFMQALVLILGLL, and LGATQQIAEVVCYLLLLIVGA.

It belongs to the CobS family. Requires Mg(2+) as cofactor.

It is found in the cell inner membrane. The catalysed reaction is alpha-ribazole + adenosylcob(III)inamide-GDP = adenosylcob(III)alamin + GMP + H(+). It carries out the reaction alpha-ribazole 5'-phosphate + adenosylcob(III)inamide-GDP = adenosylcob(III)alamin 5'-phosphate + GMP + H(+). It participates in cofactor biosynthesis; adenosylcobalamin biosynthesis; adenosylcobalamin from cob(II)yrinate a,c-diamide: step 7/7. Its function is as follows. Joins adenosylcobinamide-GDP and alpha-ribazole to generate adenosylcobalamin (Ado-cobalamin). Also synthesizes adenosylcobalamin 5'-phosphate from adenosylcobinamide-GDP and alpha-ribazole 5'-phosphate. The chain is Adenosylcobinamide-GDP ribazoletransferase from Shewanella piezotolerans (strain WP3 / JCM 13877).